The sequence spans 264 residues: Low molecular mass lipoprotein PBMHPC-23 (264 aa).

The first 23 residues, Met1–Ala23, serve as a signal peptide directing secretion.

This sequence belongs to the 30 kDa lipoprotein family.

It localises to the secreted. The polypeptide is Low molecular mass lipoprotein PBMHPC-23 (Bombyx mori (Silk moth)).